Reading from the N-terminus, the 597-residue chain is FERM domain-containing protein 3 (597 aa).

Residues Met32–Lys312 enclose the FERM domain. The segment at Ser409–Ile435 is disordered. A compositionally biased stretch (acidic residues) spans Glu423 to Glu432. Residues Leu531–Glu551 traverse the membrane as a helical segment.

The protein localises to the membrane. Putative tumor suppressor gene that may be implicated in the origin and progression of lung cancer. The polypeptide is FERM domain-containing protein 3 (FRMD3) (Pongo abelii (Sumatran orangutan)).